A 959-amino-acid chain; its full sequence is Glycine dehydrogenase (decarboxylating) (959 aa).

Residue Lys-707 is modified to N6-(pyridoxal phosphate)lysine.

The protein belongs to the GcvP family. The glycine cleavage system is composed of four proteins: P, T, L and H. Pyridoxal 5'-phosphate serves as cofactor.

The enzyme catalyses N(6)-[(R)-lipoyl]-L-lysyl-[glycine-cleavage complex H protein] + glycine + H(+) = N(6)-[(R)-S(8)-aminomethyldihydrolipoyl]-L-lysyl-[glycine-cleavage complex H protein] + CO2. Functionally, the glycine cleavage system catalyzes the degradation of glycine. The P protein binds the alpha-amino group of glycine through its pyridoxal phosphate cofactor; CO(2) is released and the remaining methylamine moiety is then transferred to the lipoamide cofactor of the H protein. This is Glycine dehydrogenase (decarboxylating) from Photobacterium profundum (strain SS9).